The chain runs to 218 residues: Imidazole glycerol phosphate synthase subunit HisH (218 aa).

The region spanning 7 to 211 (STVIIDTGCA…LALDKASLDA (205 aa)) is the Glutamine amidotransferase type-1 domain. The Nucleophile role is filled by Cys82. Catalysis depends on residues His186 and Glu188.

As to quaternary structure, heterodimer of HisH and HisF.

It is found in the cytoplasm. It carries out the reaction 5-[(5-phospho-1-deoxy-D-ribulos-1-ylimino)methylamino]-1-(5-phospho-beta-D-ribosyl)imidazole-4-carboxamide + L-glutamine = D-erythro-1-(imidazol-4-yl)glycerol 3-phosphate + 5-amino-1-(5-phospho-beta-D-ribosyl)imidazole-4-carboxamide + L-glutamate + H(+). It catalyses the reaction L-glutamine + H2O = L-glutamate + NH4(+). Its pathway is amino-acid biosynthesis; L-histidine biosynthesis; L-histidine from 5-phospho-alpha-D-ribose 1-diphosphate: step 5/9. Its function is as follows. IGPS catalyzes the conversion of PRFAR and glutamine to IGP, AICAR and glutamate. The HisH subunit catalyzes the hydrolysis of glutamine to glutamate and ammonia as part of the synthesis of IGP and AICAR. The resulting ammonia molecule is channeled to the active site of HisF. The polypeptide is Imidazole glycerol phosphate synthase subunit HisH (Shewanella sediminis (strain HAW-EB3)).